We begin with the raw amino-acid sequence, 505 residues long: RNA-splicing ligase RtcB homolog (505 aa).

Mn(2+) is bound by residues Asp-119, Cys-122, His-227, and His-259. Asn-226–Glu-230 serves as a coordination point for GMP. At Ser-300 the chain carries Phosphoserine. Position 353 (His-353) interacts with Mn(2+). Residues His-353 to Asn-354, Gly-402 to Met-405, Ser-409, and His-428 to Gly-431 each bind GMP. His-428 serves as the catalytic GMP-histidine intermediate. Residue Lys-496 forms a Glycyl lysine isopeptide (Lys-Gly) (interchain with G-Cter in SUMO2) linkage. Lys-504 contributes to the GMP binding site.

This sequence belongs to the RtcB family. As to quaternary structure, catalytic component of the tRNA-splicing ligase complex. Mn(2+) is required as a cofactor.

It is found in the nucleus. The protein localises to the cytoplasm. It carries out the reaction a 3'-end 3'-phospho-ribonucleotide-RNA + a 5'-end dephospho-ribonucleoside-RNA + GTP = a ribonucleotidyl-ribonucleotide-RNA + GMP + diphosphate. The catalysed reaction is a 3'-end 2',3'-cyclophospho-ribonucleotide-RNA + a 5'-end dephospho-ribonucleoside-RNA + GTP + H2O = a ribonucleotidyl-ribonucleotide-RNA + GMP + diphosphate + H(+). Catalytic subunit of the tRNA-splicing ligase complex that acts by directly joining spliced tRNA halves to mature-sized tRNAs by incorporating the precursor-derived splice junction phosphate into the mature tRNA as a canonical 3',5'-phosphodiester. May act as an RNA ligase with broad substrate specificity, and may function toward other RNAs. The chain is RNA-splicing ligase RtcB homolog from Rattus norvegicus (Rat).